The primary structure comprises 197 residues: Nucleoside triphosphate pyrophosphatase (197 aa).

Aspartate 75 serves as the catalytic Proton acceptor.

It belongs to the Maf family. A divalent metal cation is required as a cofactor.

The protein resides in the cytoplasm. It catalyses the reaction a ribonucleoside 5'-triphosphate + H2O = a ribonucleoside 5'-phosphate + diphosphate + H(+). It carries out the reaction a 2'-deoxyribonucleoside 5'-triphosphate + H2O = a 2'-deoxyribonucleoside 5'-phosphate + diphosphate + H(+). Its function is as follows. Nucleoside triphosphate pyrophosphatase. May have a dual role in cell division arrest and in preventing the incorporation of modified nucleotides into cellular nucleic acids. In Haemophilus ducreyi (strain 35000HP / ATCC 700724), this protein is Nucleoside triphosphate pyrophosphatase.